The following is a 324-amino-acid chain: tRNA uridine(34) hydroxylase (324 aa).

Positions 127–221 (QQEETIVIDA…YGKDPEVQGE (95 aa)) constitute a Rhodanese domain. Catalysis depends on cysteine 181, which acts as the Cysteine persulfide intermediate.

It belongs to the TrhO family.

The enzyme catalyses uridine(34) in tRNA + AH2 + O2 = 5-hydroxyuridine(34) in tRNA + A + H2O. Catalyzes oxygen-dependent 5-hydroxyuridine (ho5U) modification at position 34 in tRNAs. This Bacillus cytotoxicus (strain DSM 22905 / CIP 110041 / 391-98 / NVH 391-98) protein is tRNA uridine(34) hydroxylase.